The sequence spans 492 residues: Transcript termination protein OPG145 (492 aa).

Positions 100–256 constitute a Helicase ATP-binding domain; it reads MIELKRPLYI…NSIINIAKLS (157 aa). Residue 113-120 participates in ATP binding; it reads LACGFGKT. The DEAH box motif lies at 206–209; the sequence is DESH.

Belongs to the helicase family. Poxviruses subfamily. Interacts with OPG087. Might be part of a transcription complex composed at least of OPG087, OPG110, and OPG145.

The protein resides in the virion. In terms of biological role, DNA helicase which seems to act as a postreplicative transcription termination factor. Involved in ATP-dependent release of nascent RNA. Forms a stable complex with single-stranded DNA, and to a lesser extent RNA. This Cynomys gunnisoni (Gunnison's prairie dog) protein is Transcript termination protein OPG145 (OPG145).